The sequence spans 397 residues: Subtilisin-like protease 3 (397 aa).

The N-terminal stretch at 1–19 (MGCIKVISVFLAAIAAVDA) is a signal peptide. The propeptide occupies 20–116 (RAFFHNRGGS…VEHDRVVKLA (97 aa)). An Inhibitor I9 domain is found at 35 to 116 (SYIVVMKDGV…VEHDRVVKLA (82 aa)). Residues 126 to 397 (TWGLGRVSHR…NRLLYNGSGQ (272 aa)) enclose the Peptidase S8 domain. Active-site charge relay system residues include aspartate 158 and histidine 189. N-linked (GlcNAc...) asparagine glycosylation is present at asparagine 250. Serine 344 (charge relay system) is an active-site residue. A glycan (N-linked (GlcNAc...) asparagine) is linked at asparagine 393.

Belongs to the peptidase S8 family.

The protein resides in the secreted. Its function is as follows. Secreted subtilisin-like serine protease with keratinolytic activity that contributes to pathogenicity. In Trichophyton tonsurans (Scalp ringworm fungus), this protein is Subtilisin-like protease 3 (SUB3).